The primary structure comprises 271 residues: 3-methyl-2-oxobutanoate hydroxymethyltransferase (271 aa).

The Mg(2+) site is built by Asp-42 and Asp-86. 3-methyl-2-oxobutanoate contacts are provided by residues 42-43 (DS), Asp-86, and Lys-116. Position 118 (Glu-118) interacts with Mg(2+). The active-site Proton acceptor is Glu-185.

Belongs to the PanB family. Homodecamer; pentamer of dimers. Mg(2+) is required as a cofactor.

It is found in the cytoplasm. The enzyme catalyses 3-methyl-2-oxobutanoate + (6R)-5,10-methylene-5,6,7,8-tetrahydrofolate + H2O = 2-dehydropantoate + (6S)-5,6,7,8-tetrahydrofolate. It functions in the pathway cofactor biosynthesis; (R)-pantothenate biosynthesis; (R)-pantoate from 3-methyl-2-oxobutanoate: step 1/2. Functionally, catalyzes the reversible reaction in which hydroxymethyl group from 5,10-methylenetetrahydrofolate is transferred onto alpha-ketoisovalerate to form ketopantoate. The polypeptide is 3-methyl-2-oxobutanoate hydroxymethyltransferase (Synechococcus sp. (strain CC9605)).